Consider the following 5098-residue polypeptide: Auxin transport protein BIG (5098 aa).

At A2 the chain carries N-acetylalanine. Helical transmembrane passes span 1150 to 1170 and 1458 to 1478; these read AILLSCILSIRCIVLTINGLL and LAAEEKLLPGLKFIFGVIGTL. The segment covering 1539-1549 has biased composition (acidic residues); sequence SVDEDEDDGTS. The tract at residues 1539–1562 is disordered; it reads SVDEDEDDGTSDGEVASLDKEDEE. Residues 1573-1644 form a UBR-type zinc finger; sequence KVCTFTSSGS…RGSSCQCLKP (72 aa). Residues 2613-2672 form a ZZ-type zinc finger; sequence SVQYCCDGCSTVPILRRRWHCTVCPDFDLCEACYEVLDADRLPPPHTRDHPMTAIPIEVE. Zn(2+) is bound by residues C2618, C2621, C2633, C2636, C2642, C2645, H2658, and H2662. The chain crosses the membrane as a helical span at residues 2813–2833; the sequence is SSLGEIVILVFMFFTLMLRSW. Residues 3149-3174 are disordered; sequence EVVTGSNRSGSQSVDSKKKKKGEDGH. Residues 3151–3162 show a composition bias toward polar residues; sequence VTGSNRSGSQSV. The segment at 3464–3504 adopts an MYND-type; degenerate zinc-finger fold; that stretch reads CPRCSRPVTDKHGICSNCHENAYQCRQCRNINYENLDSFLC. Coiled coils occupy residues 3537–3557 and 4313–4333; these read KKGLAAIESESENAHKRYQQL and LEILLDMIKSLQDDFKSNQEE. A UBR4 E3 catalytic module region spans residues 4569–5098; the sequence is PSVPLILSML…QFVRSAIDKD (530 aa). A HemiRING-type zinc finger spans residues 4698-4817; sequence GLACMVCREG…WDNLNALGRA (120 aa). Zn(2+)-binding residues include C4701, C4704, H4751, and C4754. Residues 4820 to 5098 form the UZI domain; it reads SRLRLLTYDI…QFVRSAIDKD (279 aa). The segment covering 4891–4903 has biased composition (low complexity); it reads SSTSTATAPSSDS. The interval 4891 to 4915 is disordered; it reads SSTSTATAPSSDSRPLTPGSQLSST.

The protein belongs to the UBR4 family. In terms of tissue distribution, constitutively expressed in roots, rosette leaves, inflorescence stems, and flowers. Present in inflorescence meristems, floral meristems and vascular tissues.

The protein resides in the membrane. In terms of biological role, required for auxin efflux and polar auxin transport (PAT) influencing auxin-mediated developmental responses (e.g. cell elongation, apical dominance, lateral root production, inflorescence architecture, general growth and development). Controls the elongation of the pedicels and stem internodes through auxin action. Involved in the expression modulation of light-regulated genes. Represses CAB1 and CAB3 genes expression in etiolated seedlings. Confers sensitivity to the auxin transport inhibitors N-1-naphthylphthalamic acid (NPA), 2-carboxyphenyl-3-phenylpropane-l,2-dione (CPD), and methyl-2-chloro-9-hydroxyfluorene-9-carboxylate (CFM). Influences the polarized subcellular distribution of the auxin transporter PIN1 in response to auxin transport inhibitors. Plays a role in the regulation of responses to phytohormones such as auxin, cytokinins, ethylene and gibberellic acid (GA), particularly during light-mediated stimuli (e.g. shade ovoidance, etiolation). Required for pericycle cell activation to form lateral root primordia (LRP) in both high and low phosphate P conditions. Necessary for the plant-growth promotion and lateral root development mediated by the fungus Trichoderma virens. In Arabidopsis thaliana (Mouse-ear cress), this protein is Auxin transport protein BIG (BIG).